The chain runs to 187 residues: Orotate phosphoribosyltransferase (187 aa).

Residues Arg98, Lys99, Lys102, His104, and 128 to 136 contribute to the 5-phospho-alpha-D-ribose 1-diphosphate site; that span reads EDVTTTGGS. Orotate is bound by residues Thr132 and Arg160.

The protein belongs to the purine/pyrimidine phosphoribosyltransferase family. PyrE subfamily. Homodimer. Requires Mg(2+) as cofactor.

The catalysed reaction is orotidine 5'-phosphate + diphosphate = orotate + 5-phospho-alpha-D-ribose 1-diphosphate. Its pathway is pyrimidine metabolism; UMP biosynthesis via de novo pathway; UMP from orotate: step 1/2. Catalyzes the transfer of a ribosyl phosphate group from 5-phosphoribose 1-diphosphate to orotate, leading to the formation of orotidine monophosphate (OMP). This Bradyrhizobium diazoefficiens (strain JCM 10833 / BCRC 13528 / IAM 13628 / NBRC 14792 / USDA 110) protein is Orotate phosphoribosyltransferase.